The primary structure comprises 153 residues: Pheromone-binding protein Gp-9 (153 aa).

The first 19 residues, 1–19 (MKTFVLHIFIFALVAFASA), serve as a signal peptide directing secretion. 3 disulfides stabilise this stretch: Cys-37/Cys-77, Cys-73/Cys-129, and Cys-118/Cys-138.

This sequence belongs to the PBP/GOBP family. As to quaternary structure, homodimer.

The protein resides in the secreted. Functionally, colony queen number, a major feature of social organization, is associated with worker genotype for Gp-9. Colonies are headed by either a single reproductive queen (monogyne form) or multiple queens (polygyne form). Differences in worker Gp-9 genotypes between social forms may cause differences in workers' abilities to recognize queens and regulate their numbers. This Solenopsis invicta (Red imported fire ant) protein is Pheromone-binding protein Gp-9.